A 317-amino-acid polypeptide reads, in one-letter code: Melanocyte-stimulating hormone receptor (317 aa).

At 1 to 37 the chain is on the extracellular side; it reads MPMQEPQRRLLGPFNSTRTGAPHLELSANQTGPWCLH. N-linked (GlcNAc...) asparagine glycosylation is found at asparagine 15 and asparagine 29. Residues 38–63 traverse the membrane as a helical segment; that stretch reads VSIPDGLFLSLGLVSLVENVLVVISI. The Cytoplasmic portion of the chain corresponds to 64 to 72; the sequence is AKNQNLHSP. Residues 73–93 form a helical membrane-spanning segment; the sequence is MYYFICCLALSDLLVSVSIVL. Over 94–118 the chain is Extracellular; the sequence is ETTLILVLEAGALATRVTVVQQLDN. The chain crosses the membrane as a helical span at residues 119–140; that stretch reads VIDVLICASMVSSLCFLGAIAV. Topologically, residues 141–163 are cytoplasmic; it reads DRYISIFYALRYHSIVTLPRARW. A helical membrane pass occupies residues 164–183; that stretch reads AIVAIWVASISSSTLFVAYY. The Extracellular portion of the chain corresponds to 184 to 191; it reads NHTAVLLC. A helical membrane pass occupies residues 192–211; it reads LVTFFLATLALMVVLYVHML. Residues 212-240 lie on the Cytoplasmic side of the membrane; that stretch reads ARAHQHAQAIAQLHKRQHLVHQGFRLKGA. A helical transmembrane segment spans residues 241–266; that stretch reads ATLTILLGIFFLCWGPFFLYLTLIVL. Over 267-279 the chain is Extracellular; the sequence is CPKHPTCGCFFKN. The helical transmembrane segment at 280–300 threads the bilayer; sequence LNLFLALIIFNSIVDPLIYAF. Over 301 to 317 the chain is Cytoplasmic; sequence RSQELRMTLKEVLLCSW. A lipid anchor (S-palmitoyl cysteine) is attached at cysteine 315.

Belongs to the G-protein coupled receptor 1 family. As to quaternary structure, interacts with MGRN1, but does not undergo MGRN1-mediated ubiquitination; this interaction competes with GNAS-binding and thus inhibits agonist-induced cAMP production. Interacts with OPN3; the interaction results in a decrease in MC1R-mediated cAMP signaling and ultimately a decrease in melanin production in melanocytes.

It is found in the cell membrane. Its function is as follows. Receptor for MSH (alpha, beta and gamma) and ACTH. The activity of this receptor is mediated by G proteins which activate adenylate cyclase. Mediates melanogenesis, the production of eumelanin (black/brown) and phaeomelanin (red/yellow), via regulation of cAMP signaling in melanocytes. The chain is Melanocyte-stimulating hormone receptor (MC1R) from Chaetodipus penicillatus (Desert pocket mouse).